The following is a 308-amino-acid chain: Growth/differentiation factor 15 (308 aa).

The signal sequence occupies residues 1–29; it reads MPGQELRTVNGSQMLLVLLVLSWLPHGGA. Positions 30-194 are excised as a propeptide; sequence LSLAEASRAS…RPQAARGRRR (165 aa). Asparagine 70 is a glycosylation site (N-linked (GlcNAc...) asparagine). Positions 152–177 are disordered; it reads APALHLRLSPPPSQSDQLLAESSSAR. Over residues 165–177 the composition is skewed to polar residues; it reads QSDQLLAESSSAR. Disulfide bonds link cysteine 203–cysteine 210, cysteine 211–cysteine 274, cysteine 240–cysteine 305, and cysteine 244–cysteine 307.

It belongs to the TGF-beta family. Homodimer; disulfide-linked. Interacts with GFRAL and RET; ligand of GFRAL, which mediates GDF15 internalization and cellular signaling through interaction with RET via the formation of a 2:2:2 ternary complex composed of GDF15, GFRAL and RET. Detected in plasma (at protein level). Highly expressed in placenta, with lower levels in prostate and colon and some expression in kidney.

It localises to the secreted. Its function is as follows. Hormone produced in response to various stresses to confer information about those stresses to the brain, and trigger an aversive response, characterized by nausea, vomiting, and/or loss of appetite. The aversive response is both required to reduce continuing exposure to those stresses at the time of exposure and to promote avoidance behavior in the future. Acts by binding to its receptor, GFRAL, activating GFRAL-expressing neurons localized in the area postrema and nucleus tractus solitarius of the brainstem. It then triggers the activation of neurons localized within the parabrachial nucleus and central amygdala, which constitutes part of the 'emergency circuit' that shapes responses to stressful conditions. The GDF15-GFRAL signal induces expression of genes involved in metabolism, such as lipid metabolism in adipose tissues. Required for avoidance behavior in response to food allergens: induced downstream of mast cell activation to promote aversion and minimize harmful effects of exposure to noxious substances. In addition to suppress appetite, also promotes weight loss by enhancing energy expenditure in muscle: acts by increasing calcium futile cycling in muscle. Contributes to the effect of metformin, an anti-diabetic drug, on appetite reduction and weight loss: produced in the kidney in response to metformin treatment, thereby activating the GDF15-GFRAL response, leading to reduced appetite and weight. The contribution of GDF15 to weight loss following metformin treatment is however limited and subject to discussion. Produced in response to anticancer drugs, such as camptothecin or cisplatin, promoting nausea, vomiting and contributing to malnutrition. Overproduced in many cancers, promoting anorexia in cancer (cachexia). Responsible for the risk of nausea and vomiting during pregnancy: high levels of GDF15 during pregnancy, mostly originating from the fetus, are associated with increased nausea and vomiting. Maternal sensitivity to nausea is probably determined by pre-pregnancy exposure to GDF15, women with naturally high level of GDF15 being less susceptible to nausea than women with low levels of GDF15 before pregnancy. Promotes metabolic adaptation in response to systemic inflammation caused by bacterial and viral infections in order to promote tissue tolerance and prevent tissue damage. Required for tissue tolerance in response to myocardial infarction by acting as an inhibitor of leukocyte integring activation, thereby protecting against cardiac rupture. Inhibits growth hormone signaling on hepatocytes. The chain is Growth/differentiation factor 15 from Homo sapiens (Human).